Reading from the N-terminus, the 1008-residue chain is Probable transport protein MmpL10 (1008 aa).

12 helical membrane-spanning segments follow: residues 23 to 43, 202 to 222, 225 to 245, 257 to 277, 301 to 321, 340 to 360, 389 to 409, 835 to 855, 862 to 882, 895 to 915, 940 to 960, and 961 to 981; these read WPWV…MTVP, IELV…RNPI, LLPL…VSGV, MIVL…VFLI, ALIS…ITFL, IGIA…LVLA, VAYL…ASLV, DLQL…MALL, IYLV…CVLV, VPGL…MLLA, VITA…LSSI, and ATVV…TFIV.

It belongs to the resistance-nodulation-cell division (RND) (TC 2.A.6) family. MmpL subfamily.

The protein resides in the cell membrane. The sequence is that of Probable transport protein MmpL10 (mmpL10) from Mycobacterium leprae (strain TN).